Here is a 920-residue protein sequence, read N- to C-terminus: MDWSQTLNLPKTDFPMRANLAQREPQFLRFWEENDIFKKMLKKNRNNKKFILHDGPPYANGDIHLGHALNKVLKDIVNKYKSLQGYYTPYIPGWDTHGLPIEQQVIKKLGVNRHEVDPVEFRKKCKEFALSYIDIQRQQFKRLGVFGEWEDPYMTLDPKFEARQIRVFGEMAKKGYIYKGLKPVYWCPSCETALAEAEIEYQEDKTYSIYVKFEVIDDKGLFANLNLSGKKVYIVIWTTTTWTLPGNLAIALNTDFDYSLVDVGNEILIVASELVERVMKTNKIDQYHEIARFKGKDLEYVKCKHPFLDRTSLVILGEHVTLEAGTGCVHTAPGHGEEDFEVCERYNIPVIVPVDNKGYLTQEAGKFAGLFYEDSNKEIAKELEASDHLLGVEKITHQYPHCWRCKNPVIFRATEQWFASVKGFREEALKAVDDVKWVPEWGRDRIYNMIADRQDWCISRQRIWGVPIPIFYCKNCRKELITDETIDHIAKIFEKEGSDAWFSKDVKELLPEGTKCPVCGCMEFEKETDIMDVWFDSGSSHAYVLESREDLEWPCDMYLEGNDQYRGWFQSSLLTAVATKGRAPYRIVLTHGFVVDGEGKKMSKSEGNVISPFDIINEFGADILRLWCVSADYTTDMRISKDIIKQLTEIYRKIRNTARFLLGNLYDFNPKTDKVGCENLKEIDKWALQRLYKLIEKVTKAYEEYDYNQVYHLVHNFCVIDMSNLYLDINKDRLYASKSESLDRRSAQTVMYEILVALTKLIAPILSFTAEEIWQNIIFKEEDAESVFLTSWPKVNENILKDETLEEKWNKIIEIKDIVAKQLEIARNEKLIGSSLDSKVKIFAKGNIKRFIEENKDIIQEVLIVSQLEVEEGDSDQIKVEVYKADGLKCERCWKFDTMVGKNEENLNVCPRCYEVVKVK.

A 'HIGH' region motif is present at residues 57–67 (PYANGDIHLGH). Glu560 provides a ligand contact to L-isoleucyl-5'-AMP. Positions 601–605 (KMSKS) match the 'KMSKS' region motif. Lys604 is an ATP binding site. The Zn(2+) site is built by Cys890, Cys893, Cys910, and Cys913.

Belongs to the class-I aminoacyl-tRNA synthetase family. IleS type 1 subfamily. As to quaternary structure, monomer. Zn(2+) serves as cofactor.

The protein localises to the cytoplasm. The enzyme catalyses tRNA(Ile) + L-isoleucine + ATP = L-isoleucyl-tRNA(Ile) + AMP + diphosphate. In terms of biological role, catalyzes the attachment of isoleucine to tRNA(Ile). As IleRS can inadvertently accommodate and process structurally similar amino acids such as valine, to avoid such errors it has two additional distinct tRNA(Ile)-dependent editing activities. One activity is designated as 'pretransfer' editing and involves the hydrolysis of activated Val-AMP. The other activity is designated 'posttransfer' editing and involves deacylation of mischarged Val-tRNA(Ile). In Caldicellulosiruptor saccharolyticus (strain ATCC 43494 / DSM 8903 / Tp8T 6331), this protein is Isoleucine--tRNA ligase.